The chain runs to 116 residues: uncharacterized protein (116 aa).

Positions 1–19 (MRWDVIILYAISRPYATRR) are cleaved as a signal peptide. The disordered stretch occupies residues 18–50 (RRTGSHTHPRDSRYIAANQRRPPSACRVGPSPA).

This is an uncharacterized protein from Saccharomyces cerevisiae (strain ATCC 204508 / S288c) (Baker's yeast).